The primary structure comprises 169 residues: Disulfide bond formation protein B 1 (169 aa).

Over 1–14 (MSDNTLYLRREKRF) the chain is Cytoplasmic. Residues 15–31 (LVLLGIICLALIGGALY) traverse the membrane as a helical segment. Residues 32–49 (MQVVLDEAPCPLCILQRY) are Periplasmic-facing. Cysteine 41 and cysteine 44 form a disulfide bridge. The chain crosses the membrane as a helical span at residues 50–65 (ALLFIAIFAFIGAAMP). The Cytoplasmic portion of the chain corresponds to 66-72 (GRRSVTA). Residues 73-89 (FETLVTLSALGGIAAAG) form a helical membrane-spanning segment. Residues 90 to 144 (RHVWILAHPSDSCGIDVLQPIVDGLPLATLFPTGFQVSGFCTTPYPPVLGLSLAQ) are Periplasmic-facing. Cysteine 102 and cysteine 130 are disulfide-bonded. Residues 145–163 (WALTAFVLTAVLVPACIIR) form a helical membrane-spanning segment. At 164-169 (NRRKPY) the chain is on the cytoplasmic side.

It belongs to the DsbB family.

It localises to the cell inner membrane. Required for disulfide bond formation in some periplasmic proteins. Acts by oxidizing the DsbA protein. The polypeptide is Disulfide bond formation protein B 1 (Pseudomonas syringae pv. syringae (strain B728a)).